The primary structure comprises 279 residues: UTP--glucose-1-phosphate uridylyltransferase (279 aa).

It belongs to the UDPGP type 2 family.

The enzyme catalyses alpha-D-glucose 1-phosphate + UTP + H(+) = UDP-alpha-D-glucose + diphosphate. Functionally, may play a role in stationary phase survival. The chain is UTP--glucose-1-phosphate uridylyltransferase (galU) from Pseudomonas aeruginosa.